Reading from the N-terminus, the 240-residue chain is Ribonuclease PH (240 aa).

Residues Arg-86 and 124 to 126 contribute to the phosphate site; that span reads GTR.

Belongs to the RNase PH family. As to quaternary structure, homohexameric ring arranged as a trimer of dimers.

The catalysed reaction is tRNA(n+1) + phosphate = tRNA(n) + a ribonucleoside 5'-diphosphate. Phosphorolytic 3'-5' exoribonuclease that plays an important role in tRNA 3'-end maturation. Removes nucleotide residues following the 3'-CCA terminus of tRNAs; can also add nucleotides to the ends of RNA molecules by using nucleoside diphosphates as substrates, but this may not be physiologically important. Probably plays a role in initiation of 16S rRNA degradation (leading to ribosome degradation) during starvation. The sequence is that of Ribonuclease PH from Mannheimia succiniciproducens (strain KCTC 0769BP / MBEL55E).